The sequence spans 182 residues: Large ribosomal subunit protein bL25 (182 aa).

Belongs to the bacterial ribosomal protein bL25 family. CTC subfamily. Part of the 50S ribosomal subunit; part of the 5S rRNA/L5/L18/L25 subcomplex. Contacts the 5S rRNA. Binds to the 5S rRNA independently of L5 and L18.

Functionally, this is one of the proteins that binds to the 5S RNA in the ribosome where it forms part of the central protuberance. This chain is Large ribosomal subunit protein bL25, found in Borrelia turicatae (strain 91E135).